Consider the following 1252-residue polypeptide: DNA-directed RNA polymerase subunit beta (1252 aa).

The protein belongs to the RNA polymerase beta chain family. In terms of assembly, the RNAP catalytic core consists of 2 alpha, 1 beta, 1 beta' and 1 omega subunit. When a sigma factor is associated with the core the holoenzyme is formed, which can initiate transcription.

The enzyme catalyses RNA(n) + a ribonucleoside 5'-triphosphate = RNA(n+1) + diphosphate. DNA-dependent RNA polymerase catalyzes the transcription of DNA into RNA using the four ribonucleoside triphosphates as substrates. The protein is DNA-directed RNA polymerase subunit beta of Chlamydia pneumoniae (Chlamydophila pneumoniae).